Here is a 311-residue protein sequence, read N- to C-terminus: Protein translocase subunit SecF (311 aa).

6 consecutive transmembrane segments (helical) span residues 19-39 (AIYASLFLIGVSLVSLFTQGL), 142-162 (MLAMLYAMVAILIYISFRFEL), 166-186 (LGAVLALVHDVVLTMGFFSVL), 192-212 (LVVVAALLTVVGYSLNDTIVV), 245-265 (ITSLTTVLVLIALFVLGGAVI), and 272-292 (LLFGVGIGTYSSIFVASPLVL).

This sequence belongs to the SecD/SecF family. SecF subfamily. In terms of assembly, forms a complex with SecD. Part of the essential Sec protein translocation apparatus which comprises SecA, SecYEG and auxiliary proteins SecDF-YajC and YidC.

It is found in the cell inner membrane. Functionally, part of the Sec protein translocase complex. Interacts with the SecYEG preprotein conducting channel. SecDF uses the proton motive force (PMF) to complete protein translocation after the ATP-dependent function of SecA. The sequence is that of Protein translocase subunit SecF from Magnetococcus marinus (strain ATCC BAA-1437 / JCM 17883 / MC-1).